We begin with the raw amino-acid sequence, 310 residues long: Ribosomal RNA small subunit methyltransferase H (310 aa).

Residues 32–34 (AGH), aspartate 51, phenylalanine 78, aspartate 99, and glutamine 106 contribute to the S-adenosyl-L-methionine site. The interval 290–310 (GELEDNRRSRSAKLRVAEKQK) is disordered.

Belongs to the methyltransferase superfamily. RsmH family.

Its subcellular location is the cytoplasm. It catalyses the reaction cytidine(1402) in 16S rRNA + S-adenosyl-L-methionine = N(4)-methylcytidine(1402) in 16S rRNA + S-adenosyl-L-homocysteine + H(+). Functionally, specifically methylates the N4 position of cytidine in position 1402 (C1402) of 16S rRNA. The chain is Ribosomal RNA small subunit methyltransferase H from Exiguobacterium sp. (strain ATCC BAA-1283 / AT1b).